The following is a 353-amino-acid chain: UPF0283 membrane protein YcjF (353 aa).

A run of 3 helical transmembrane segments spans residues 70 to 90 (MVMG…VQWT), 100 to 120 (VALG…GSVV), and 213 to 233 (ESTL…FIAW).

Belongs to the UPF0283 family.

It localises to the cell inner membrane. This Shigella boydii serotype 4 (strain Sb227) protein is UPF0283 membrane protein YcjF.